The primary structure comprises 197 residues: Phosphoheptose isomerase (197 aa).

In terms of domain architecture, SIS spans 34–196 (MVQCLLGGNK…DRTLFPQDEQ (163 aa)). Residue 49–51 (NGG) coordinates substrate. Histidine 58 and glutamate 62 together coordinate Zn(2+). Substrate is bound by residues glutamate 62, 91-92 (ND), 117-119 (STS), serine 122, and glutamine 172. Zn(2+)-binding residues include glutamine 172 and histidine 180.

The protein belongs to the SIS family. GmhA subfamily. As to quaternary structure, homotetramer. Zn(2+) is required as a cofactor.

Its subcellular location is the cytoplasm. It catalyses the reaction 2 D-sedoheptulose 7-phosphate = D-glycero-alpha-D-manno-heptose 7-phosphate + D-glycero-beta-D-manno-heptose 7-phosphate. Its pathway is carbohydrate biosynthesis; D-glycero-D-manno-heptose 7-phosphate biosynthesis; D-glycero-alpha-D-manno-heptose 7-phosphate and D-glycero-beta-D-manno-heptose 7-phosphate from sedoheptulose 7-phosphate: step 1/1. Functionally, catalyzes the isomerization of sedoheptulose 7-phosphate in D-glycero-D-manno-heptose 7-phosphate. This Shewanella frigidimarina (strain NCIMB 400) protein is Phosphoheptose isomerase.